The chain runs to 45 residues: Large ribosomal subunit protein bL34 (45 aa).

Positions 1-45 (MTKRTFGGTSRKRKRVSGFRVRMRSHTGRRVVRTRRKRGRSRLTV) are disordered. Residues 10–45 (SRKRKRVSGFRVRMRSHTGRRVVRTRRKRGRSRLTV) are compositionally biased toward basic residues.

It belongs to the bacterial ribosomal protein bL34 family.

The protein is Large ribosomal subunit protein bL34 of Prochlorococcus marinus (strain NATL2A).